The primary structure comprises 81 residues: Large ribosomal subunit protein bL31B (81 aa).

Belongs to the bacterial ribosomal protein bL31 family. Type B subfamily. As to quaternary structure, part of the 50S ribosomal subunit.

This Borreliella burgdorferi (strain ATCC 35210 / DSM 4680 / CIP 102532 / B31) (Borrelia burgdorferi) protein is Large ribosomal subunit protein bL31B.